The chain runs to 565 residues: Translation machinery-associated protein 64 (565 aa).

Positions 89-170 constitute a PUA domain; sequence LPIVLTHGFV…VAVKIIHHFN (82 aa). The SWIB/MDM2 domain maps to 362–447; that stretch reads TLYKPFNLAK…GEILHPLLTN (86 aa). Positions 475 to 547 constitute an SUI1 domain; it reads IKIITEMKIG…SIIDHLNKLG (73 aa).

Belongs to the eIF2D family. In terms of assembly, interacts with the 40S ribosomal subunit.

The chain is Translation machinery-associated protein 64 (TMA64) from Saccharomyces cerevisiae (strain ATCC 204508 / S288c) (Baker's yeast).